Consider the following 518-residue polypeptide: Putative transposase for insertion sequence IS408 (518 aa).

The region spanning 11 to 94 (LKEVLRLKWA…PDYTALHREL (84 aa)) is the HTH IS408-type domain. The H-T-H motif DNA-binding region spans 23 to 44 (LTHRQISRAIGISVGAVSKFAA). The region spanning 140–335 (QQHRAGEKLF…LPVRRYEIAT (196 aa)) is the Integrase catalytic domain. The disordered stretch occupies residues 496-518 (LPTTPAEWRSPEHENVRGPDYYH). A compositionally biased stretch (basic and acidic residues) spans 504-518 (RSPEHENVRGPDYYH).

It belongs to the transposase IS21/IS408/IS1162 family.

Its function is as follows. Required for the transposition of the insertion element. The chain is Putative transposase for insertion sequence IS408 from Burkholderia multivorans (strain ATCC 17616 / 249).